A 141-amino-acid polypeptide reads, in one-letter code: Large ribosomal subunit protein uL11 (141 aa).

The protein belongs to the universal ribosomal protein uL11 family. As to quaternary structure, part of the ribosomal stalk of the 50S ribosomal subunit. Interacts with L10 and the large rRNA to form the base of the stalk. L10 forms an elongated spine to which L12 dimers bind in a sequential fashion forming a multimeric L10(L12)X complex. One or more lysine residues are methylated.

Functionally, forms part of the ribosomal stalk which helps the ribosome interact with GTP-bound translation factors. The sequence is that of Large ribosomal subunit protein uL11 from Latilactobacillus sakei subsp. sakei (strain 23K) (Lactobacillus sakei subsp. sakei).